We begin with the raw amino-acid sequence, 385 residues long: Homoserine O-succinyltransferase (385 aa).

The AB hydrolase-1 domain occupies Asn-45 to Asp-355. Ser-151 (nucleophile) is an active-site residue. A substrate-binding site is contributed by Arg-221. Catalysis depends on residues Asp-316 and His-349. Asp-350 contacts substrate.

The protein belongs to the AB hydrolase superfamily. MetX family. As to quaternary structure, homodimer.

The protein localises to the cytoplasm. The enzyme catalyses L-homoserine + succinyl-CoA = O-succinyl-L-homoserine + CoA. It functions in the pathway amino-acid biosynthesis; L-methionine biosynthesis via de novo pathway; O-succinyl-L-homoserine from L-homoserine: step 1/1. Transfers a succinyl group from succinyl-CoA to L-homoserine, forming succinyl-L-homoserine. The chain is Homoserine O-succinyltransferase from Herminiimonas arsenicoxydans.